The following is a 456-amino-acid chain: Bifunctional protein GlmU (456 aa).

The tract at residues 1–229 (MLNSAMSVVI…ISETDGVNNR (229 aa)) is pyrophosphorylase. UDP-N-acetyl-alpha-D-glucosamine contacts are provided by residues 11–14 (LAAG), Lys25, Gln76, 81–82 (GT), 103–105 (YGD), Gly140, Glu154, Asn169, and Asn227. Residue Asp105 participates in Mg(2+) binding. Asn227 serves as a coordination point for Mg(2+). A linker region spans residues 230–250 (LQLSRLERIYQAEQAEKLLLS). Residues 251 to 456 (GVMLRDPARF…QGWQRPVKKK (206 aa)) are N-acetyltransferase. The UDP-N-acetyl-alpha-D-glucosamine site is built by Arg333 and Lys351. His363 serves as the catalytic Proton acceptor. 2 residues coordinate UDP-N-acetyl-alpha-D-glucosamine: Tyr366 and Asn377. Acetyl-CoA-binding positions include Ala380, 386 to 387 (NY), Ser405, Ala423, and Arg440.

The protein in the N-terminal section; belongs to the N-acetylglucosamine-1-phosphate uridyltransferase family. It in the C-terminal section; belongs to the transferase hexapeptide repeat family. In terms of assembly, homotrimer. Mg(2+) is required as a cofactor.

The protein localises to the cytoplasm. It catalyses the reaction alpha-D-glucosamine 1-phosphate + acetyl-CoA = N-acetyl-alpha-D-glucosamine 1-phosphate + CoA + H(+). The catalysed reaction is N-acetyl-alpha-D-glucosamine 1-phosphate + UTP + H(+) = UDP-N-acetyl-alpha-D-glucosamine + diphosphate. It functions in the pathway nucleotide-sugar biosynthesis; UDP-N-acetyl-alpha-D-glucosamine biosynthesis; N-acetyl-alpha-D-glucosamine 1-phosphate from alpha-D-glucosamine 6-phosphate (route II): step 2/2. Its pathway is nucleotide-sugar biosynthesis; UDP-N-acetyl-alpha-D-glucosamine biosynthesis; UDP-N-acetyl-alpha-D-glucosamine from N-acetyl-alpha-D-glucosamine 1-phosphate: step 1/1. It participates in bacterial outer membrane biogenesis; LPS lipid A biosynthesis. Its function is as follows. Catalyzes the last two sequential reactions in the de novo biosynthetic pathway for UDP-N-acetylglucosamine (UDP-GlcNAc). The C-terminal domain catalyzes the transfer of acetyl group from acetyl coenzyme A to glucosamine-1-phosphate (GlcN-1-P) to produce N-acetylglucosamine-1-phosphate (GlcNAc-1-P), which is converted into UDP-GlcNAc by the transfer of uridine 5-monophosphate (from uridine 5-triphosphate), a reaction catalyzed by the N-terminal domain. This Salmonella paratyphi A (strain ATCC 9150 / SARB42) protein is Bifunctional protein GlmU.